The chain runs to 545 residues: Hydroxylamine reductase (545 aa).

Residues C7, C10, C19, and C25 each contribute to the [4Fe-4S] cluster site. Hybrid [4Fe-2O-2S] cluster contacts are provided by H241, E265, C309, C400, C428, C453, E488, and K490. Position 400 is a cysteine persulfide; in oxidized form (C400).

This sequence belongs to the HCP family. Monomer. It depends on [4Fe-4S] cluster as a cofactor. Hybrid [4Fe-2O-2S] cluster is required as a cofactor.

The protein localises to the cytoplasm. The catalysed reaction is A + NH4(+) + H2O = hydroxylamine + AH2 + H(+). In terms of biological role, catalyzes the reduction of hydroxylamine to form NH(3) and H(2)O. The chain is Hydroxylamine reductase from Desulfovibrio desulfuricans (strain ATCC 27774 / DSM 6949 / MB).